A 268-amino-acid chain; its full sequence is Nickel import ATP-binding protein NikE (268 aa).

An ABC transporter domain is found at 4-252; it reads LNVSGLSHHY…SSDAGRVLQN (249 aa). 45 to 52 provides a ligand contact to ATP; the sequence is GRSGCGKS.

The protein belongs to the ABC transporter superfamily. Nickel importer (TC 3.A.1.5.3) family. As to quaternary structure, the complex is composed of two ATP-binding proteins (NikD and NikE), two transmembrane proteins (NikB and NikC) and a solute-binding protein (NikA).

The protein resides in the cell inner membrane. It carries out the reaction Ni(2+)(out) + ATP + H2O = Ni(2+)(in) + ADP + phosphate + H(+). Part of the ABC transporter complex NikABCDE involved in nickel import. Responsible for energy coupling to the transport system. The protein is Nickel import ATP-binding protein NikE of Shigella sonnei (strain Ss046).